The following is an 867-amino-acid chain: Glucans biosynthesis glucosyltransferase H (867 aa).

The tract at residues 71–91 (DDEGRTQLETMPKATRSSISP) is disordered. A run of 6 helical transmembrane segments spans residues 139–156 (YILL…TWYM), 194–216 (ILIL…LMGF), 518–540 (VMSY…LQVV), 568–590 (IALL…LLIW), 603–625 (VTIS…MLFH), and 680–702 (FLFW…VFSS).

This sequence belongs to the glycosyltransferase 2 family. OpgH subfamily.

The protein localises to the cell inner membrane. Its pathway is glycan metabolism; osmoregulated periplasmic glucan (OPG) biosynthesis. Functionally, involved in the biosynthesis of osmoregulated periplasmic glucans (OPGs). The sequence is that of Glucans biosynthesis glucosyltransferase H from Nitrosomonas europaea (strain ATCC 19718 / CIP 103999 / KCTC 2705 / NBRC 14298).